The chain runs to 923 residues: Transportin-3 (923 aa).

Residue methionine 1 is modified to N-acetylmethionine. Serine 74 carries the phosphoserine modification. A phosphothreonine mark is found at histidine 242 and threonine 896.

As to quaternary structure, interacts with (GTP-bound) Ran. Interacts with (phosphorylated) SFRS1 and SFRS2; leading to their nuclear import. Interacts with NUP62. Interacts with RBM4. Interacts with CPSF6, promoting its nuclear import.

It is found in the nucleus envelope. The protein localises to the cytoplasm. In terms of biological role, importin, which transports target proteins into the nucleus. Specifically mediates the nuclear import of splicing factor serine/arginine (SR) proteins, such as RBM4, SFRS1 and SFRS2, by recognizing phosphorylated SR domains. Also mediates the nuclear import of serine/arginine (SR) protein CPSF6, independently of CPSF6 phosphorylation. The nuclear import process is regulated by the small GTPase Ran that partitions between cytoplasm and nucleus in the predominantly GDP- and GTP-bound form, respectively. Importin associates with target cargo proteins in the cytoplasm, and the competitive binding of GTP-bound Ran induces the release of cargos in the nucleus. This chain is Transportin-3, found in Mus musculus (Mouse).